We begin with the raw amino-acid sequence, 101 residues long: Small ribosomal subunit protein uS14 (101 aa).

The tract at residues A36 to R61 is disordered. Residues K47–R59 show a composition bias toward polar residues.

The protein belongs to the universal ribosomal protein uS14 family. Part of the 30S ribosomal subunit. Contacts proteins S3 and S10.

Functionally, binds 16S rRNA, required for the assembly of 30S particles and may also be responsible for determining the conformation of the 16S rRNA at the A site. This is Small ribosomal subunit protein uS14 from Methylobacillus flagellatus (strain ATCC 51484 / DSM 6875 / VKM B-1610 / KT).